We begin with the raw amino-acid sequence, 99 residues long: Ubiquitin-related modifier 1 homolog (99 aa).

Gly-99 bears the 1-thioglycine mark. Gly-99 is covalently cross-linked (Glycyl lysine isopeptide (Gly-Lys) (interchain with K-? in acceptor proteins)).

This sequence belongs to the URM1 family. Post-translationally, C-terminal thiocarboxylation occurs in 2 steps, it is first acyl-adenylated (-COAMP) via the hesA/moeB/thiF part of the MOCS3 homolog, then thiocarboxylated (-COSH) via the rhodanese domain of the MOCS3 homolog.

The protein localises to the cytoplasm. The protein operates within tRNA modification; 5-methoxycarbonylmethyl-2-thiouridine-tRNA biosynthesis. Acts as a sulfur carrier required for 2-thiolation of mcm(5)S(2)U at tRNA wobble positions of cytosolic tRNA(Lys), tRNA(Glu) and tRNA(Gln). Serves as sulfur donor in tRNA 2-thiolation reaction by being thiocarboxylated (-COSH) at its C-terminus by MOCS3. The sulfur is then transferred to tRNA to form 2-thiolation of mcm(5)S(2)U. Also acts as a ubiquitin-like protein (UBL) that is covalently conjugated via an isopeptide bond to lysine residues of target proteins. The thiocarboxylated form serves as substrate for conjugation and oxidative stress specifically induces the formation of UBL-protein conjugates. In Chlamydomonas reinhardtii (Chlamydomonas smithii), this protein is Ubiquitin-related modifier 1 homolog.